The chain runs to 196 residues: DnaA initiator-associating protein DiaA (196 aa).

One can recognise an SIS domain in the interval 34 to 196 (LVQSLLNGNK…DNTLFPHQDD (163 aa)).

This sequence belongs to the SIS family. DiaA subfamily. Homotetramer; dimer of dimers.

Its function is as follows. Required for the timely initiation of chromosomal replication via direct interactions with the DnaA initiator protein. This is DnaA initiator-associating protein DiaA from Shigella flexneri serotype 5b (strain 8401).